Consider the following 513-residue polypeptide: ATP synthase subunit alpha (513 aa).

Residue 169–176 coordinates ATP; the sequence is GDRQTGKT.

It belongs to the ATPase alpha/beta chains family. As to quaternary structure, F-type ATPases have 2 components, CF(1) - the catalytic core - and CF(0) - the membrane proton channel. CF(1) has five subunits: alpha(3), beta(3), gamma(1), delta(1), epsilon(1). CF(0) has three main subunits: a(1), b(2) and c(9-12). The alpha and beta chains form an alternating ring which encloses part of the gamma chain. CF(1) is attached to CF(0) by a central stalk formed by the gamma and epsilon chains, while a peripheral stalk is formed by the delta and b chains.

The protein resides in the cell inner membrane. It carries out the reaction ATP + H2O + 4 H(+)(in) = ADP + phosphate + 5 H(+)(out). Functionally, produces ATP from ADP in the presence of a proton gradient across the membrane. The alpha chain is a regulatory subunit. This chain is ATP synthase subunit alpha, found in Bordetella bronchiseptica (strain ATCC BAA-588 / NCTC 13252 / RB50) (Alcaligenes bronchisepticus).